The chain runs to 319 residues: UDP-3-O-acylglucosamine N-acyltransferase (319 aa).

His230 (proton acceptor) is an active-site residue.

It belongs to the transferase hexapeptide repeat family. LpxD subfamily. Homotrimer.

The enzyme catalyses a UDP-3-O-[(3R)-3-hydroxyacyl]-alpha-D-glucosamine + a (3R)-hydroxyacyl-[ACP] = a UDP-2-N,3-O-bis[(3R)-3-hydroxyacyl]-alpha-D-glucosamine + holo-[ACP] + H(+). Its pathway is bacterial outer membrane biogenesis; LPS lipid A biosynthesis. In terms of biological role, catalyzes the N-acylation of UDP-3-O-acylglucosamine using 3-hydroxyacyl-ACP as the acyl donor. Is involved in the biosynthesis of lipid A, a phosphorylated glycolipid that anchors the lipopolysaccharide to the outer membrane of the cell. The sequence is that of UDP-3-O-acylglucosamine N-acyltransferase from Campylobacter lari (strain RM2100 / D67 / ATCC BAA-1060).